The chain runs to 448 residues: 4-hydroxybenzoate transporter PcaK (448 aa).

The Cytoplasmic portion of the chain corresponds to 1-30 (MNQAQNSVGKSLDVQSFINQQPLSRYQWRV). Residues 31-51 (VLLCFLIVFLDGLDTAAMGFI) form a helical membrane-spanning segment. The Periplasmic segment spans residues 52 to 67 (APALSQEWGIDRASLG). A helical membrane pass occupies residues 68 to 88 (PVMSAALIGMVFGALGSGPLA). Over 89-94 (DRFGRK) the chain is Cytoplasmic. A helical transmembrane segment spans residues 95-115 (GVLVGAVLVFGGFSLASAYAT). At 116–119 (NVDQ) the chain is on the periplasmic side. The helical transmembrane segment at 120-140 (LLVLRFLTGLGLGAGMPNATT) threads the bilayer. Residues 141–152 (LLSEYTPERLKS) lie on the Cytoplasmic side of the membrane. The chain crosses the membrane as a helical span at residues 153–173 (LLVTSMFCGFNLGMAGGGFIS). Topologically, residues 174 to 184 (AKMIPAYGWHS) are periplasmic. The chain crosses the membrane as a helical span at residues 185–205 (LLVIGGVLPLLLALVLMVWLP). Over 206–261 (ESARFLVVRNRGTDKIRKTLSPIAPQVVAEAGSFSVPEQKAVAARSVFAVIFSGTY) the chain is Cytoplasmic. A helical membrane pass occupies residues 262-282 (GLGTMLLWLTYFMGLVIVYLL). The Periplasmic portion of the chain corresponds to 283–301 (TSWLPTLMRDSGASMEQAA). Residues 302 to 322 (FIGALFQFGGVLSAVGVGWAM) form a helical membrane-spanning segment. Residues 323–329 (DRYNPHK) are Cytoplasmic-facing. Residues 330–350 (VIGIFYLLAGVFAYAVGQSLG) form a helical membrane-spanning segment. A topological domain (periplasmic) is located at residue N351. Residues 352–372 (ITVLATLVLIAGMCVNGAQSA) traverse the membrane as a helical segment. At 373-398 (MPSLAARFYPTQGRATGVSWMLGIGR) the chain is on the cytoplasmic side. A helical transmembrane segment spans residues 399 to 419 (FGAILGAWSGATLLGLGWNFE). At 420 to 421 (QV) the chain is on the periplasmic side. A helical transmembrane segment spans residues 422–442 (LTALLVPAALATVGVIVKGLV). Over 443-448 (SHADAT) the chain is Cytoplasmic.

It belongs to the major facilitator superfamily. Aromatic acid:H(+) symporter (AAHS) (TC 2.A.1.15) family.

It localises to the cell inner membrane. Its function is as follows. Transports 4-hydroxybenzoate (4-HBA) and protocatechuate across the membrane. Driven by the proton motive force. Also functions as a chemoreceptor, which is required for chemotaxis to aromatic acids. This chain is 4-hydroxybenzoate transporter PcaK (pcaK), found in Pseudomonas putida (Arthrobacter siderocapsulatus).